The sequence spans 90 residues: Small ribosomal subunit protein uS15c (90 aa).

It belongs to the universal ribosomal protein uS15 family. Part of the 30S ribosomal subunit.

It is found in the plastid. The protein localises to the chloroplast. This chain is Small ribosomal subunit protein uS15c (rps15), found in Lotus japonicus (Lotus corniculatus var. japonicus).